The chain runs to 228 residues: ATP-dependent dethiobiotin synthetase BioD (228 aa).

ATP is bound at residue 12 to 17 (EIGKTT). Mg(2+) is bound at residue T16. Residue K37 is part of the active site. S41 is a binding site for substrate. Residues D54, 116–119 (EGAG), and 205–207 (PRL) each bind ATP. The Mg(2+) site is built by D54 and E116.

The protein belongs to the dethiobiotin synthetase family. As to quaternary structure, homodimer. The cofactor is Mg(2+).

The protein resides in the cytoplasm. The enzyme catalyses (7R,8S)-7,8-diammoniononanoate + CO2 + ATP = (4R,5S)-dethiobiotin + ADP + phosphate + 3 H(+). The protein operates within cofactor biosynthesis; biotin biosynthesis; biotin from 7,8-diaminononanoate: step 1/2. Catalyzes a mechanistically unusual reaction, the ATP-dependent insertion of CO2 between the N7 and N8 nitrogen atoms of 7,8-diaminopelargonic acid (DAPA, also called 7,8-diammoniononanoate) to form a ureido ring. This is ATP-dependent dethiobiotin synthetase BioD from Pseudomonas aeruginosa (strain LESB58).